Consider the following 1037-residue polypeptide: Importin-8 (1037 aa).

Residues 22–102 form the Importin N-terminal domain; sequence AENELNQSYK…RDNIVEGIIR (81 aa). Basic and acidic residues predominate over residues 886–895; the sequence is DRSKAEKADM. The interval 886-934 is disordered; that stretch reads DRSKAEKADMEENEEISSDEEETNVTAQAMQSNNGRGEDEEEEDDDWDE. Positions 896-908 are enriched in acidic residues; it reads EENEEISSDEEET. A phosphoserine mark is found at S902 and S903. Residues 909-920 are compositionally biased toward polar residues; it reads NVTAQAMQSNNG. Acidic residues predominate over residues 923-934; it reads EDEEEEDDDWDE.

Belongs to the importin beta family. In terms of assembly, forms a heterodimer with KPNB1. Interacts with SRP19. Interacts with RPL23A. Binds directly to nuclear pore complexes. Interacts with LRPPRC; the interaction occurs when LRPPRC is in its RNA-free form and promotes import of LRPPRC to the nucleus to allow for EIF4E-mediated export of mRNAS from the nucleus to the cytoplasm.

It localises to the cytoplasm. Its subcellular location is the nucleus. Involved in nuclear protein import, either by acting as autonomous nuclear transport receptor or as an adapter-like protein in association with the importin-beta subunit KPNB1. Acting autonomously, may serve as receptor for nuclear localization signals (NLS) and promote translocation of import substrates through the nuclear pore complex (NPC) by an energy requiring, Ran-dependent mechanism. At the nucleoplasmic side of the NPC, Ran binds to importin, the importin/substrate complex dissociates and importin is re-exported from the nucleus to the cytoplasm where GTP hydrolysis releases Ran. The directionality of nuclear import is thought to be conferred by an asymmetric distribution of the GTP- and GDP-bound forms of Ran between the cytoplasm and nucleus. In vitro mediates the nuclear import of the signal recognition particle protein SRP19. May also be involved in cytoplasm-to-nucleus shuttling of a broad spectrum of other cargos, including Argonaute-microRNAs complexes, the JUN protein, RELA/NF-kappa-B p65 subunit, the translation initiation factor EIF4E and a set of receptor-activated mothers against decapentaplegic homolog (SMAD) transcription factors that play a critical role downstream of the large family of transforming growth factor beta and bone morphogenetic protein (BMP) cytokines. The chain is Importin-8 (IPO8) from Homo sapiens (Human).